Reading from the N-terminus, the 808-residue chain is MLVSYKWLQEYIEIGDISPQEIAEKMTRSGIEIDFIHERNKGATNVVVGYVAEVAPHPDADKLNVCQVDIGEEERVQIVCGAPNVSSGQYVAVAKVGARLPGGIKIKKAKLRGQHSNGMICSLQELGIDSKLVPKGYVDGIYVFPETQSVEPGQDALAIFELNDSVLELDLTPNRSDCMHMLGVAYELAALYDRPIKMPKTKVKEVIESADGYINVSVENGEDTPFYQALVIKDVKIGPSPSWLQNRLMAAGIRPISNVVDVTNYVLLEYGQPLHAFDYHALASKSIHVRRAKAEEAFTTLDGEKRTLSPEQLVVTNGREPVALAGVMGGLHSEVTAATTTVVLEAAAFHPTVVRRSARLAGLRSDSSARFEKGINQERVSEAARRAAYLIQEIAGGIVLSGAAIADARVRSERVIALDLDKMNERIGTNLSIMEVAALMRRLQFPCEKVGSDLHVTVPHRRGDITIPEDLYEEVARLYGYDELPSTLPVGNTTQGKRTAEQAKRRKMEAYLRSAGLSEAISYALTSSEKAALFAAETIKPIQVAMPMSEERSTMRTSLLPHLYDICTYNLNRKNNDVLLYERGSVFLSEQETLTELPTEQERLAVLLSGTYMSHPWQGEKKAVDFYVLKGIAEGLMETLGLSEQIEYKPDVRPGFHPGRTANVLLKGESIGFLAQVHPSTQKALDLNETYVLELNVDALFAAETEALIYRGIPRYPAITRDMALVVSKETTAAELMAIIREAGGELLETVSIFDVYEGEHMESGKKSIAFSLTYRHAERTLTDEEASLAHEGIVAEVQKQTGAVLRA.

The region spanning 40–157 is the tRNA-binding domain; it reads NKGATNVVVG…QSVEPGQDAL (118 aa). Positions 411-486 constitute a B5 domain; the sequence is RSERVIALDL…RLYGYDELPS (76 aa). Mg(2+) contacts are provided by aspartate 464, aspartate 470, glutamate 473, and glutamate 474. Residues 714–807 enclose the FDX-ACB domain; the sequence is PRYPAITRDM…VQKQTGAVLR (94 aa).

This sequence belongs to the phenylalanyl-tRNA synthetase beta subunit family. Type 1 subfamily. As to quaternary structure, tetramer of two alpha and two beta subunits. Mg(2+) is required as a cofactor.

Its subcellular location is the cytoplasm. It carries out the reaction tRNA(Phe) + L-phenylalanine + ATP = L-phenylalanyl-tRNA(Phe) + AMP + diphosphate + H(+). This is Phenylalanine--tRNA ligase beta subunit from Shouchella clausii (strain KSM-K16) (Alkalihalobacillus clausii).